A 366-amino-acid polypeptide reads, in one-letter code: UDP-N-acetylglucosamine--N-acetylmuramyl-(pentapeptide) pyrophosphoryl-undecaprenol N-acetylglucosamine transferase (366 aa).

UDP-N-acetyl-alpha-D-glucosamine contacts are provided by residues 14-16 (TGG), asparagine 125, arginine 168, serine 196, and glutamine 297.

The protein belongs to the glycosyltransferase 28 family. MurG subfamily.

The protein resides in the cell inner membrane. The enzyme catalyses di-trans,octa-cis-undecaprenyl diphospho-N-acetyl-alpha-D-muramoyl-L-alanyl-D-glutamyl-meso-2,6-diaminopimeloyl-D-alanyl-D-alanine + UDP-N-acetyl-alpha-D-glucosamine = di-trans,octa-cis-undecaprenyl diphospho-[N-acetyl-alpha-D-glucosaminyl-(1-&gt;4)]-N-acetyl-alpha-D-muramoyl-L-alanyl-D-glutamyl-meso-2,6-diaminopimeloyl-D-alanyl-D-alanine + UDP + H(+). The protein operates within cell wall biogenesis; peptidoglycan biosynthesis. Its function is as follows. Cell wall formation. Catalyzes the transfer of a GlcNAc subunit on undecaprenyl-pyrophosphoryl-MurNAc-pentapeptide (lipid intermediate I) to form undecaprenyl-pyrophosphoryl-MurNAc-(pentapeptide)GlcNAc (lipid intermediate II). The chain is UDP-N-acetylglucosamine--N-acetylmuramyl-(pentapeptide) pyrophosphoryl-undecaprenol N-acetylglucosamine transferase from Rhodopseudomonas palustris (strain BisB5).